Reading from the N-terminus, the 265-residue chain is Short-chain dehydrogenase/reductase fsr5 (265 aa).

Residues 1 to 32 (MASLGKYVSKLAGSRVLVIGGSSGIGFGVAEA) form the signal peptide. Positions 22, 23, 25, 45, and 50 each coordinate NADP(+). Asn62 is a glycosylation site (N-linked (GlcNAc...) asparagine). 3 residues coordinate NADP(+): Asn88, Arg130, and Thr204. 2 N-linked (GlcNAc...) asparagine glycosylation sites follow: Asn218 and Asn250.

It belongs to the short-chain dehydrogenases/reductases (SDR) family.

Functionally, short-chain dehydrogenase/reductase; part of the gene cluster that mediates the biosynthesis of fusarubins, highly pigmented naphthoquinones responsible for the coloration of the fruiting bodies. The non-reducing polyketide synthase FSR1 is responsible for the condensation of seven acetyl-CoA units to yield a haptaketide. After rings A and B are formed by aldol-type cyclization, the PKS-derived product is released as 6-O-demethylfusarubinaldehyde. Then, two hydroxyl groups at C-5 and C-10 are incorporated by FSR3, and simultaneously hydroxyl groups at C-6 and C-8 are methylated by FSR2. The aldehyde is, on the one hand, reduced by FSR3 to 8-O-methylfusarubin alcohol, which equilibrates mainly with 8-O-methylfusarubin and only small amounts of 8-O-methylnectriafurone. On the other hand, the aldehyde can be oxidized to form 8-O-methylfusarubinic acid, a reaction driven by FSR3 equilibrating with 8-O-methylfusarubinlactone, finally resulting in 8-O-methylanhydrofusarubinlactol after a further reduction step and loss of water. 8-O-Methylfusarubinic acid can also undergo decarboxylation, resulting in 8-O-methyl-13-hydroxynorjavanicin after another hydroxylation step at C-13. Both steps are most likely also accomplished by FSR3. No enzymatic function has been determined so far for either FSR4 and FSR5. Their deletion does not alter the product spectrum, but the possibility that they catalyze specific enzymatic steps during perithecium development cannot be ruled out. FSR4 might possess a regulatory function in the biosynthesis of fusarubins. The polypeptide is Short-chain dehydrogenase/reductase fsr5 (Gibberella fujikuroi (strain CBS 195.34 / IMI 58289 / NRRL A-6831) (Bakanae and foot rot disease fungus)).